Here is a 262-residue protein sequence, read N- to C-terminus: Type III pantothenate kinase (262 aa).

6–13 (DVGNTNAV) lines the ATP pocket. Residues Tyr-100 and 107 to 110 (GADR) contribute to the substrate site. The active-site Proton acceptor is Asp-109. Position 129 (Asp-129) interacts with K(+). Thr-132 provides a ligand contact to ATP. Residue Thr-184 participates in substrate binding.

This sequence belongs to the type III pantothenate kinase family. Homodimer. It depends on NH4(+) as a cofactor. K(+) serves as cofactor.

It is found in the cytoplasm. It carries out the reaction (R)-pantothenate + ATP = (R)-4'-phosphopantothenate + ADP + H(+). It participates in cofactor biosynthesis; coenzyme A biosynthesis; CoA from (R)-pantothenate: step 1/5. Functionally, catalyzes the phosphorylation of pantothenate (Pan), the first step in CoA biosynthesis. This is Type III pantothenate kinase from Bacillus cereus (strain G9842).